Reading from the N-terminus, the 95-residue chain is Aspartyl/glutamyl-tRNA(Asn/Gln) amidotransferase subunit C (95 aa).

This sequence belongs to the GatC family. Heterotrimer of A, B and C subunits.

The enzyme catalyses L-glutamyl-tRNA(Gln) + L-glutamine + ATP + H2O = L-glutaminyl-tRNA(Gln) + L-glutamate + ADP + phosphate + H(+). The catalysed reaction is L-aspartyl-tRNA(Asn) + L-glutamine + ATP + H2O = L-asparaginyl-tRNA(Asn) + L-glutamate + ADP + phosphate + 2 H(+). In terms of biological role, allows the formation of correctly charged Asn-tRNA(Asn) or Gln-tRNA(Gln) through the transamidation of misacylated Asp-tRNA(Asn) or Glu-tRNA(Gln) in organisms which lack either or both of asparaginyl-tRNA or glutaminyl-tRNA synthetases. The reaction takes place in the presence of glutamine and ATP through an activated phospho-Asp-tRNA(Asn) or phospho-Glu-tRNA(Gln). In Cereibacter sphaeroides (strain ATCC 17023 / DSM 158 / JCM 6121 / CCUG 31486 / LMG 2827 / NBRC 12203 / NCIMB 8253 / ATH 2.4.1.) (Rhodobacter sphaeroides), this protein is Aspartyl/glutamyl-tRNA(Asn/Gln) amidotransferase subunit C.